The chain runs to 98 residues: HssA/B-like protein 33 (98 aa).

2 disordered regions span residues 1–29 (MTLF…SGTS) and 60–98 (AKSS…SCSC). Residues 60–72 (AKSSGGSCGGKGG) are compositionally biased toward gly residues. Residues 73–88 (PHNHGHGNGHGPHGHG) show a composition bias toward basic residues. The segment covering 89–98 (GKGSGGSCSC) has biased composition (gly residues).

The protein belongs to the hssA/B family.

This Dictyostelium discoideum (Social amoeba) protein is HssA/B-like protein 33 (hssl33).